We begin with the raw amino-acid sequence, 758 residues long: Catalase-peroxidase (758 aa).

A compositionally biased stretch (polar residues) spans M1–V10. The disordered stretch occupies residues M1–R57. The segment at residues W128–Y250 is a cross-link (tryptophyl-tyrosyl-methioninium (Trp-Tyr) (with M-276)). H129 functions as the Proton acceptor in the catalytic mechanism. The tryptophyl-tyrosyl-methioninium (Tyr-Met) (with W-128) cross-link spans Y250–M276. A heme b-binding site is contributed by H291.

It belongs to the peroxidase family. Peroxidase/catalase subfamily. In terms of assembly, homodimer or homotetramer. Heme b is required as a cofactor. In terms of processing, formation of the three residue Trp-Tyr-Met cross-link is important for the catalase, but not the peroxidase activity of the enzyme.

It carries out the reaction H2O2 + AH2 = A + 2 H2O. It catalyses the reaction 2 H2O2 = O2 + 2 H2O. In terms of biological role, bifunctional enzyme with both catalase and broad-spectrum peroxidase activity. The polypeptide is Catalase-peroxidase (Salinispora tropica (strain ATCC BAA-916 / DSM 44818 / JCM 13857 / NBRC 105044 / CNB-440)).